A 573-amino-acid polypeptide reads, in one-letter code: Dihydroxy-acid dehydratase (573 aa).

The segment covering 1-14 (MTEKSPKPHKRSDA) has biased composition (basic and acidic residues). The interval 1–21 (MTEKSPKPHKRSDAITEGPNR) is disordered. C55 contacts [2Fe-2S] cluster. D87 contributes to the Mg(2+) binding site. Residue C128 participates in [2Fe-2S] cluster binding. Residues D129 and K130 each contribute to the Mg(2+) site. K130 carries the N6-carboxylysine modification. C200 lines the [2Fe-2S] cluster pocket. Mg(2+) is bound at residue E450. The Proton acceptor role is filled by S476.

It belongs to the IlvD/Edd family. Homodimer. It depends on [2Fe-2S] cluster as a cofactor. The cofactor is Mg(2+).

The catalysed reaction is (2R)-2,3-dihydroxy-3-methylbutanoate = 3-methyl-2-oxobutanoate + H2O. It carries out the reaction (2R,3R)-2,3-dihydroxy-3-methylpentanoate = (S)-3-methyl-2-oxopentanoate + H2O. It participates in amino-acid biosynthesis; L-isoleucine biosynthesis; L-isoleucine from 2-oxobutanoate: step 3/4. It functions in the pathway amino-acid biosynthesis; L-valine biosynthesis; L-valine from pyruvate: step 3/4. Functionally, functions in the biosynthesis of branched-chain amino acids. Catalyzes the dehydration of (2R,3R)-2,3-dihydroxy-3-methylpentanoate (2,3-dihydroxy-3-methylvalerate) into 2-oxo-3-methylpentanoate (2-oxo-3-methylvalerate) and of (2R)-2,3-dihydroxy-3-methylbutanoate (2,3-dihydroxyisovalerate) into 2-oxo-3-methylbutanoate (2-oxoisovalerate), the penultimate precursor to L-isoleucine and L-valine, respectively. This chain is Dihydroxy-acid dehydratase, found in Koribacter versatilis (strain Ellin345).